The chain runs to 102 residues: Small ribosomal subunit protein uS10 (102 aa).

Belongs to the universal ribosomal protein uS10 family. In terms of assembly, part of the 30S ribosomal subunit.

In terms of biological role, involved in the binding of tRNA to the ribosomes. This chain is Small ribosomal subunit protein uS10, found in Methanocorpusculum labreanum (strain ATCC 43576 / DSM 4855 / Z).